The chain runs to 424 residues: L-glutamine:2-deoxy-scyllo-inosose aminotransferase (424 aa).

Residue K202 is modified to N6-(pyridoxal phosphate)lysine.

The protein belongs to the DegT/DnrJ/EryC1 family. L-glutamine:2-deoxy-scyllo-inosose/scyllo-inosose aminotransferase subfamily. Pyridoxal 5'-phosphate serves as cofactor.

It carries out the reaction 2-deoxy-L-scyllo-inosose + L-glutamine = 2-deoxy-scyllo-inosamine + 2-oxoglutaramate. The enzyme catalyses 3-amino-2,3-dideoxy-scyllo-inosose + L-glutamine = 2-deoxystreptamine + 2-oxoglutaramate. The protein operates within metabolic intermediate biosynthesis; 2-deoxystreptamine biosynthesis; 2-deoxystreptamine from D-glucose 6-phosphate: step 2/4. It functions in the pathway metabolic intermediate biosynthesis; 2-deoxystreptamine biosynthesis; 2-deoxystreptamine from D-glucose 6-phosphate: step 4/4. It participates in antibiotic biosynthesis; neomycin biosynthesis. Its function is as follows. Catalyzes the PLP-dependent transamination of 2-deoxy-scyllo-inosose (2-DOI) to form 2-deoxy-scyllo-inosamine (2-DOIA) using L-glutamine as the amino donor. Also catalyzes the transamination of 3-amino-2,3-dideoxy-scyllo-inosose (keto-2-DOIA) into 2-deoxystreptamine (2-DOS). This Streptomyces fradiae (Streptomyces roseoflavus) protein is L-glutamine:2-deoxy-scyllo-inosose aminotransferase (neoB).